The chain runs to 812 residues: Probable inorganic carbon transporter subunit DabA (812 aa).

Positions 337, 339, 499, and 514 each coordinate Zn(2+).

This sequence belongs to the inorganic carbon transporter (TC 9.A.2) DabA family. Forms a complex with DabB. Zn(2+) is required as a cofactor.

The protein resides in the cell inner membrane. In terms of biological role, part of an energy-coupled inorganic carbon pump. The sequence is that of Probable inorganic carbon transporter subunit DabA from Xanthomonas euvesicatoria pv. vesicatoria (strain 85-10) (Xanthomonas campestris pv. vesicatoria).